The primary structure comprises 120 residues: Large ribosomal subunit protein uL24 (120 aa).

The interval 1–26 (MSKQPDKQRKSQRRAPLHERHKQVRA) is disordered. Residues 10-24 (KSQRRAPLHERHKQV) are compositionally biased toward basic residues.

Belongs to the universal ribosomal protein uL24 family. Part of the 50S ribosomal subunit. Interacts weakly with protein L4.

One of two assembly initiator proteins, it binds directly to the 5'-end of the 23S rRNA, where it nucleates assembly of the 50S subunit. In terms of biological role, stabilizes the tertiary rRNA structure within the 23S rRNA domain (domain I) to which it binds. Located at the polypeptide exit tunnel on the outside of the subunit. The sequence is that of Large ribosomal subunit protein uL24 (rpl24) from Haloarcula marismortui (strain ATCC 43049 / DSM 3752 / JCM 8966 / VKM B-1809) (Halobacterium marismortui).